A 158-amino-acid chain; its full sequence is Non-secretory ribonuclease (158 aa).

The first 27 residues, 1 to 27 (MVPKLFTSQICVLLLFGLLSVEVSLQV), serve as a signal peptide directing secretion. A glycan (C-linked (Man) tryptophan) is linked at Trp34. His42 functions as the Proton acceptor in the catalytic mechanism. 4 cysteine pairs are disulfide-bonded: Cys50–Cys110, Cys64–Cys121, Cys82–Cys136, and Cys89–Cys98. Residue Tyr60 is modified to 3'-nitrotyrosine. Substrate is bound at residue 65 to 69 (KNQNT). Residues Asn86, Asn92, and Asn111 are each glycosylated (N-linked (GlcNAc...) asparagine). Catalysis depends on His153, which acts as the Proton donor.

Belongs to the pancreatic ribonuclease family. In terms of assembly, interacts with and forms a tight 1:1 complex with RNH1. Dimerization of two such complexes may occur.

Its subcellular location is the lysosome. The protein localises to the cytoplasmic granule. It catalyses the reaction an [RNA] containing cytidine + H2O = an [RNA]-3'-cytidine-3'-phosphate + a 5'-hydroxy-ribonucleotide-3'-[RNA].. The enzyme catalyses an [RNA] containing uridine + H2O = an [RNA]-3'-uridine-3'-phosphate + a 5'-hydroxy-ribonucleotide-3'-[RNA].. Functionally, this is a non-secretory ribonuclease. It is a pyrimidine specific nuclease with a slight preference for U. Cytotoxin and helminthotoxin. Possesses a wide variety of biological activities. This is Non-secretory ribonuclease (RNASE2) from Saguinus oedipus (Cotton-top tamarin).